Here is a 602-residue protein sequence, read N- to C-terminus: MDSRVSELFGGCCRPGGGPAMGGNLKARGAGGSSSCGGPKGKKKNGRNRGGKANNPPYLPPEAEDGNIEYKLKLVNPSQYRFEHLVTQMKWRLQEGRGEAVYQIGVEDNGLLVGLAEEEMRASLKTLHRMAEKVGADITVLREREVDYDSDVPRKITEVLVRKVPDNQQFLDLRVAVLGNVDSGKSTLLGVLTQGELDNGRGRARLNLFRHLHEIQSGRTSSISFEILGFNSKGEVVNYSDSRTAEEICESSSKMITFIDLAGHHKYLHTTIFGLTSYCPDCALLLVSANTGIAGTTREHLGLALALKVPFFIVVSKVDLCAKTTVERTVRQLERVLKQPGCHKVPMLVTSEDDAVTAAQQFAQSPNVTPIFTLSSVSGESLDLLKVFLNILPPLTNSKEQEELMQQLTEFQVDEIYTVPEVGTVVGGTLSSGICREGDQLVVGPTDDGCFLELRVCSIQRNRSACRVLRAGQAATLALGDFDRALLRKGMVMVSPEMNPTICSVFEAEIVLLFHATTFRRGFQVTVHVGNVRQTAVVEKIHAKDKLRTGEKAVVRFRFLKHPEYLKVGAKLLFREGVTKGIGHVTDVQAITAGEAQATMGF.

The tract at residues 18–64 is disordered; it reads GPAMGGNLKARGAGGSSSCGGPKGKKKNGRNRGGKANNPPYLPPEAE. Residues 29–39 are compositionally biased toward gly residues; it reads GAGGSSSCGGP. Residues 40–50 are compositionally biased toward basic residues; it reads KGKKKNGRNRG. The tr-type G domain maps to 170–398; the sequence is FLDLRVAVLG…LNILPPLTNS (229 aa). Residues 179-186, 260-264, and 316-319 each bind GTP; these read GNVDSGKS, DLAGH, and SKVD.

Belongs to the TRAFAC class translation factor GTPase superfamily. Classic translation factor GTPase family. GTPBP1 subfamily. As to expression, predominantly expressed in thymus, spleen, and testis. Expressed at lower levels in brain, heart, lung, kidney, and skeletal muscle. In testis, specifically expressed in spermatocytes and round spermatids.

The polypeptide is GTP-binding protein 2 (Mus musculus (Mouse)).